The sequence spans 368 residues: Probable endopolygalacturonase I (368 aa).

The signal sequence occupies residues M1–A18. A propeptide spanning residues A19–K31 is cleaved from the precursor. A disulfide bridge connects residues C35 and C50. 3 PbH1 repeats span residues V140 to Q161, A162 to E192, and S193 to S214. D207 (proton donor) is an active-site residue. C209 and C225 are oxidised to a cystine. The active site involves H229. PbH1 repeat units lie at residues V244–T265, V273–Q295, and S307–G352. N246 is a glycosylation site (N-linked (GlcNAc...) asparagine). Disulfide bonds link C335–C340 and C359–C368.

The protein belongs to the glycosyl hydrolase 28 family.

Its subcellular location is the secreted. The enzyme catalyses (1,4-alpha-D-galacturonosyl)n+m + H2O = (1,4-alpha-D-galacturonosyl)n + (1,4-alpha-D-galacturonosyl)m.. Its function is as follows. Involved in maceration and soft-rotting of plant tissue. Hydrolyzes the 1,4-alpha glycosidic bonds of de-esterified pectate in the smooth region of the plant cell wall. This Aspergillus niger (strain ATCC MYA-4892 / CBS 513.88 / FGSC A1513) protein is Probable endopolygalacturonase I (pgaI).